Consider the following 367-residue polypeptide: Uptake hydrogenase small subunit (367 aa).

Positions 1–45 (MTPTETFYEVMRRQGVTRRSFLKFCSLTATALGLGPAYTSEIAHA) form a signal peptide, tat-type signal. [4Fe-4S] cluster contacts are provided by Cys-62, Cys-65, Cys-160, Cys-194, His-232, Cys-235, Cys-260, and Cys-266. The [3Fe-4S] cluster site is built by Cys-275, Cys-294, and Cys-297.

The protein belongs to the [NiFe]/[NiFeSe] hydrogenase small subunit family. Heterodimer of a large and a small subunit. [4Fe-4S] cluster is required as a cofactor. [3Fe-4S] cluster serves as cofactor. In terms of processing, predicted to be exported by the Tat system. The position of the signal peptide cleavage has been experimentally proven.

Its subcellular location is the cell membrane. It catalyses the reaction H2 + A = AH2. In terms of biological role, this enzyme recycles the H(2) produced by nitrogenase to increase the production of ATP and to protect nitrogenase against inhibition or damage by O(2) under carbon- or phosphate-limited conditions. This is Uptake hydrogenase small subunit (hoxS) from Afipia carboxidovorans (strain ATCC 49405 / DSM 1227 / KCTC 32145 / OM5) (Oligotropha carboxidovorans).